We begin with the raw amino-acid sequence, 616 residues long: Glutamine--fructose-6-phosphate aminotransferase [isomerizing] (616 aa).

Catalysis depends on cysteine 2, which acts as the Nucleophile; for GATase activity. The Glutamine amidotransferase type-2 domain maps to 2-222; sequence CGIIGYSGPR…QERIVALSGD (221 aa). Positions 70–89 are disordered; the sequence is TGIGHTRWATHGEPSDRNAH. 2 consecutive SIS domains span residues 289–428 and 461–606; these read IRDD…LRGF and LAHW…VDRP. Lysine 611 acts as the For Fru-6P isomerization activity in catalysis.

As to quaternary structure, homodimer.

Its subcellular location is the cytoplasm. It carries out the reaction D-fructose 6-phosphate + L-glutamine = D-glucosamine 6-phosphate + L-glutamate. Catalyzes the first step in hexosamine metabolism, converting fructose-6P into glucosamine-6P using glutamine as a nitrogen source. The protein is Glutamine--fructose-6-phosphate aminotransferase [isomerizing] of Tropheryma whipplei (strain TW08/27) (Whipple's bacillus).